The primary structure comprises 375 residues: MSKRDYYEVLGVARGASDEELKKAYRRCAMKHHPDRNPGDAAAEAAFKECKEAYEVLSDGNKRRAYDAHGHAAFEHGMGGGGGPGGPDMGDIFGDIFGNIFGGGAAGPRAARRGADVGYVLELDLEEAVAGIERRIEIPTLIECAPCHGSGSEDGKVETCGTCHGRGQVRIQRGIFAMQQSCPHCDGRGTLIQNPCKTCHGAGRVEEDKVLSIKVPAGVDTGDRIRLAGEGEAGPAGTPPGDLYVEVRVREHAIFQRDGDDLHCEVPIRISQAALGDTVRVATLGGEAEIRIPAETQTGKLFRLRGKGVRSVRSRSEGDLYCRVVVETPVNLTADQRELLQQFEATFTGEDARKHSPKSATFIDGVKGFWDRMTS.

The region spanning 5-70 (DYYEVLGVAR…NKRRAYDAHG (66 aa)) is the J domain. Residues 131-208 (GIERRIEIPT…CHGAGRVEED (78 aa)) form a CR-type zinc finger. Residues Cys-144, Cys-147, Cys-160, Cys-163, Cys-182, Cys-185, Cys-196, and Cys-199 each coordinate Zn(2+). 4 CXXCXGXG motif repeats span residues 144 to 151 (CAPCHGSG), 160 to 167 (CGTCHGRG), 182 to 189 (CPHCDGRG), and 196 to 203 (CKTCHGAG).

It belongs to the DnaJ family. Homodimer. Requires Zn(2+) as cofactor.

The protein localises to the cytoplasm. Functionally, participates actively in the response to hyperosmotic and heat shock by preventing the aggregation of stress-denatured proteins and by disaggregating proteins, also in an autonomous, DnaK-independent fashion. Unfolded proteins bind initially to DnaJ; upon interaction with the DnaJ-bound protein, DnaK hydrolyzes its bound ATP, resulting in the formation of a stable complex. GrpE releases ADP from DnaK; ATP binding to DnaK triggers the release of the substrate protein, thus completing the reaction cycle. Several rounds of ATP-dependent interactions between DnaJ, DnaK and GrpE are required for fully efficient folding. Also involved, together with DnaK and GrpE, in the DNA replication of plasmids through activation of initiation proteins. This is Chaperone protein DnaJ from Xanthomonas axonopodis pv. citri (strain 306).